The following is a 442-amino-acid chain: tRNA-2-methylthio-N(6)-dimethylallyladenosine synthase (442 aa).

Residues 2 to 120 (KKVFIRTFGC…LPKMIVDKET (119 aa)) enclose the MTTase N-terminal domain. [4Fe-4S] cluster is bound by residues C11, C49, C83, C157, C161, and C164. In terms of domain architecture, Radical SAM core spans 143-375 (RVEGGAAFVS…NEVIEAETAR (233 aa)). The region spanning 378 to 441 (QTMIGTVQRC…TFSLRGKIVE (64 aa)) is the TRAM domain.

It belongs to the methylthiotransferase family. MiaB subfamily. In terms of assembly, monomer. It depends on [4Fe-4S] cluster as a cofactor.

It is found in the cytoplasm. It carries out the reaction N(6)-dimethylallyladenosine(37) in tRNA + (sulfur carrier)-SH + AH2 + 2 S-adenosyl-L-methionine = 2-methylsulfanyl-N(6)-dimethylallyladenosine(37) in tRNA + (sulfur carrier)-H + 5'-deoxyadenosine + L-methionine + A + S-adenosyl-L-homocysteine + 2 H(+). Functionally, catalyzes the methylthiolation of N6-(dimethylallyl)adenosine (i(6)A), leading to the formation of 2-methylthio-N6-(dimethylallyl)adenosine (ms(2)i(6)A) at position 37 in tRNAs that read codons beginning with uridine. The protein is tRNA-2-methylthio-N(6)-dimethylallyladenosine synthase of Neisseria gonorrhoeae (strain ATCC 700825 / FA 1090).